The primary structure comprises 214 residues: Phosphoenolpyruvate guanylyltransferase (214 aa).

Phosphoenolpyruvate-binding residues include threonine 139, glycine 155, and serine 158.

It belongs to the CofC family.

The catalysed reaction is phosphoenolpyruvate + GTP + H(+) = enolpyruvoyl-2-diphospho-5'-guanosine + diphosphate. The protein operates within cofactor biosynthesis; coenzyme F420 biosynthesis. Guanylyltransferase that catalyzes the activation of phosphoenolpyruvate (PEP) as enolpyruvoyl-2-diphospho-5'-guanosine, via the condensation of PEP with GTP. It is involved in the biosynthesis of coenzyme F420, a hydride carrier cofactor. In Salinispora arenicola (strain CNS-205), this protein is Phosphoenolpyruvate guanylyltransferase.